We begin with the raw amino-acid sequence, 99 residues long: Large ribosomal subunit protein uL23 (99 aa).

Belongs to the universal ribosomal protein uL23 family. As to quaternary structure, part of the 50S ribosomal subunit. Contacts protein L29, and trigger factor when it is bound to the ribosome.

In terms of biological role, one of the early assembly proteins it binds 23S rRNA. One of the proteins that surrounds the polypeptide exit tunnel on the outside of the ribosome. Forms the main docking site for trigger factor binding to the ribosome. The chain is Large ribosomal subunit protein uL23 from Psychromonas ingrahamii (strain DSM 17664 / CCUG 51855 / 37).